A 384-amino-acid chain; its full sequence is Beta-ureidopropionase (384 aa).

A CN hydrolase domain is found at 72–344; it reads VHVGLVQNRI…DGLLVAKLDL (273 aa). The active-site Proton acceptor is E119. Catalysis depends on K196, which acts as the Proton donor. The active-site Nucleophile is C233. S378 carries the post-translational modification Phosphoserine.

It belongs to the carbon-nitrogen hydrolase superfamily. BUP family. Homodimer, homotetramer, homooctamer; can also form higher homooligomers.

The protein localises to the cytoplasm. The enzyme catalyses 3-(carbamoylamino)propanoate + H2O + 2 H(+) = beta-alanine + NH4(+) + CO2. It catalyses the reaction 3-(carbamoylamino)-2-methylpropanoate + H2O + 2 H(+) = (R)-3-amino-2-methylpropanoate + NH4(+) + CO2. The protein operates within amino-acid biosynthesis; beta-alanine biosynthesis. Its function is as follows. Catalyzes a late step in pyrimidine degradation. Converts N-carbamoyl-beta-alanine (3-ureidopropanoate) into beta-alanine, ammonia and carbon dioxide. Likewise, converts N-carbamoyl-beta-aminoisobutyrate (3-ureidoisobutyrate) into beta-aminoisobutyrate, ammonia and carbon dioxide. The polypeptide is Beta-ureidopropionase (UPB1) (Pongo abelii (Sumatran orangutan)).